The primary structure comprises 365 residues: UDP-N-acetylglucosamine--N-acetylmuramyl-(pentapeptide) pyrophosphoryl-undecaprenol N-acetylglucosamine transferase (365 aa).

UDP-N-acetyl-alpha-D-glucosamine is bound by residues 17–19, Asn-129, Arg-167, Ser-194, Ile-250, 269–274, and Gln-295; these read TGG and ALTVSE.

The protein belongs to the glycosyltransferase 28 family. MurG subfamily.

It is found in the cell inner membrane. The catalysed reaction is di-trans,octa-cis-undecaprenyl diphospho-N-acetyl-alpha-D-muramoyl-L-alanyl-D-glutamyl-meso-2,6-diaminopimeloyl-D-alanyl-D-alanine + UDP-N-acetyl-alpha-D-glucosamine = di-trans,octa-cis-undecaprenyl diphospho-[N-acetyl-alpha-D-glucosaminyl-(1-&gt;4)]-N-acetyl-alpha-D-muramoyl-L-alanyl-D-glutamyl-meso-2,6-diaminopimeloyl-D-alanyl-D-alanine + UDP + H(+). It functions in the pathway cell wall biogenesis; peptidoglycan biosynthesis. Cell wall formation. Catalyzes the transfer of a GlcNAc subunit on undecaprenyl-pyrophosphoryl-MurNAc-pentapeptide (lipid intermediate I) to form undecaprenyl-pyrophosphoryl-MurNAc-(pentapeptide)GlcNAc (lipid intermediate II). This chain is UDP-N-acetylglucosamine--N-acetylmuramyl-(pentapeptide) pyrophosphoryl-undecaprenol N-acetylglucosamine transferase, found in Shewanella halifaxensis (strain HAW-EB4).